The chain runs to 354 residues: Squamosa promoter-binding-like protein 15 (354 aa).

The tract at residues 1-25 (MELLMCSGQAESGGSSSTESSSLSG) is disordered. The span at 7–25 (SGQAESGGSSSTESSSLSG) shows a compositional bias: low complexity. The SBP-type zinc finger occupies 56–133 (TARCQVEGCR…ACHNERRRKP (78 aa)). The Zn(2+) site is built by Cys59, Cys64, Cys81, His84, Cys100, Cys103, His107, and Cys119. Positions 116–132 (KRSCRRRLACHNERRRK) match the Bipartite nuclear localization signal motif.

It depends on Zn(2+) as a cofactor.

Its subcellular location is the nucleus. Trans-acting factor that binds specifically to the consensus nucleotide sequence 5'-TNCGTACAA-3'. The sequence is that of Squamosa promoter-binding-like protein 15 (SPL15) from Arabidopsis thaliana (Mouse-ear cress).